The primary structure comprises 176 residues: MSGYMISPEYYFIYWFLKYYLSPMIANASPVLVKGIHRIDFSHIFIDGKPLFGKNKTWEGFYVGVLMGFLTSIGIGIILCEEEYILIGLGSSIFALIGDLLGSFIKRRMNIASGEPLPIIDQLDFALMATLYYYFLGIEEFISYPLYILYSLIIILALHIITNNIAYYLGVKDKRW.

5 helical membrane passes run phenylalanine 12–leucine 32, glycine 60–cysteine 80, isoleucine 85–isoleucine 105, proline 118–isoleucine 138, and phenylalanine 141–isoleucine 161.

It belongs to the CDP-archaeol synthase family. Mg(2+) serves as cofactor.

It is found in the cell membrane. It catalyses the reaction 2,3-bis-O-(geranylgeranyl)-sn-glycerol 1-phosphate + CTP + H(+) = CDP-2,3-bis-O-(geranylgeranyl)-sn-glycerol + diphosphate. Its pathway is membrane lipid metabolism; glycerophospholipid metabolism. Its function is as follows. Catalyzes the formation of CDP-2,3-bis-(O-geranylgeranyl)-sn-glycerol (CDP-archaeol) from 2,3-bis-(O-geranylgeranyl)-sn-glycerol 1-phosphate (DGGGP) and CTP. This reaction is the third ether-bond-formation step in the biosynthesis of archaeal membrane lipids. The protein is CDP-archaeol synthase of Staphylothermus marinus (strain ATCC 43588 / DSM 3639 / JCM 9404 / F1).